The chain runs to 106 residues: UPF0473 protein LSEI_0788 (106 aa).

Belongs to the UPF0473 family.

The protein is UPF0473 protein LSEI_0788 of Lacticaseibacillus paracasei (strain ATCC 334 / BCRC 17002 / CCUG 31169 / CIP 107868 / KCTC 3260 / NRRL B-441) (Lactobacillus paracasei).